We begin with the raw amino-acid sequence, 608 residues long: UvrABC system protein C (608 aa).

Positions 16–94 (NRPGVYRMFD…IKEWRPPYNI (79 aa)) constitute a GIY-YIG domain. In terms of domain architecture, UVR spans 204–239 (NALADELNVGMEQAAMRLDFEKAAELRDQVAILRRV).

The protein belongs to the UvrC family. As to quaternary structure, interacts with UvrB in an incision complex.

It is found in the cytoplasm. Its function is as follows. The UvrABC repair system catalyzes the recognition and processing of DNA lesions. UvrC both incises the 5' and 3' sides of the lesion. The N-terminal half is responsible for the 3' incision and the C-terminal half is responsible for the 5' incision. This Pseudomonas aeruginosa (strain LESB58) protein is UvrABC system protein C.